Consider the following 206-residue polypeptide: Small ribosomal subunit protein uS4 (206 aa).

In terms of domain architecture, S4 RNA-binding spans glycine 96–lysine 156.

The protein belongs to the universal ribosomal protein uS4 family. In terms of assembly, part of the 30S ribosomal subunit. Contacts protein S5. The interaction surface between S4 and S5 is involved in control of translational fidelity.

Its function is as follows. One of the primary rRNA binding proteins, it binds directly to 16S rRNA where it nucleates assembly of the body of the 30S subunit. Functionally, with S5 and S12 plays an important role in translational accuracy. In Photorhabdus laumondii subsp. laumondii (strain DSM 15139 / CIP 105565 / TT01) (Photorhabdus luminescens subsp. laumondii), this protein is Small ribosomal subunit protein uS4.